Consider the following 553-residue polypeptide: Transcription factor IIIB 70 kDa subunit (553 aa).

The TFIIB-type zinc finger occupies 6–39 (KQQKCKTCGHTQFDVNRYTAAGDVSCLRCGTVLE). C10, C13, C31, and C34 together coordinate Zn(2+). Tandem repeats lie at residues 98 to 174 (IAAA…KMVK) and 193 to 272 (FVEK…EFKK). An interaction with TBP and with the Pol III subunit C34 region spans residues 98 to 272 (IAAALKIPDY…LQRRLNEFKK (175 aa)). An interaction with TBP region spans residues 281–553 (KSFREVENLE…KGLLGGNMGF (273 aa)). Positions 473-523 (KQEADELTGNTSKSSSGNRRKRNKSSLPAELRKELGDIDLDEDGTPRSAAD) are disordered. The span at 480 to 489 (TGNTSKSSSG) shows a compositional bias: low complexity.

Belongs to the TFIIB family. TFIIIB comprises the TATA-binding protein (TBP), the B-related factor (BRF) and a 70 kDa polypeptide.

It localises to the nucleus. Functionally, general activator of RNA polymerase III transcription. Interacts with TBP. Binds to Pol III subunit C34 and to the TAU135 component of TFIIIC. The polypeptide is Transcription factor IIIB 70 kDa subunit (TDS4) (Candida albicans (strain SC5314 / ATCC MYA-2876) (Yeast)).